The primary structure comprises 210 residues: Large ribosomal subunit protein uL3 (210 aa).

A disordered region spans residues 125 to 151 (RHGQSRGPMSHGSRYHRRPGSMGPVAP).

Belongs to the universal ribosomal protein uL3 family. As to quaternary structure, part of the 50S ribosomal subunit. Forms a cluster with proteins L14 and L19.

Its function is as follows. One of the primary rRNA binding proteins, it binds directly near the 3'-end of the 23S rRNA, where it nucleates assembly of the 50S subunit. This chain is Large ribosomal subunit protein uL3, found in Bacillus cereus (strain Q1).